A 243-amino-acid chain; its full sequence is Ribonuclease 3 (243 aa).

Residues 10–146 enclose the RNase III domain; that stretch reads VNRFRKRFDT…FIGALYLDQG (137 aa). Glutamate 59 is a Mg(2+) binding site. Aspartate 63 is an active-site residue. Mg(2+) is bound by residues aspartate 132 and glutamate 135. The active site involves glutamate 135. The region spanning 172 to 241 is the DRBM domain; that stretch reads DFKTQFQEYV…AKSAYKQLKQ (70 aa). Basic and acidic residues predominate over residues 219-231; it reads GKGKTKKESEQRA. The tract at residues 219-243 is disordered; it reads GKGKTKKESEQRAAKSAYKQLKQIK.

Belongs to the ribonuclease III family. Homodimer. The cofactor is Mg(2+).

The protein localises to the cytoplasm. It carries out the reaction Endonucleolytic cleavage to 5'-phosphomonoester.. Functionally, digests double-stranded RNA. Involved in the processing of primary rRNA transcript to yield the immediate precursors to the large and small rRNAs (23S and 16S). Processes some mRNAs, and tRNAs when they are encoded in the rRNA operon. Processes pre-crRNA and tracrRNA of type II CRISPR loci if present in the organism. The protein is Ribonuclease 3 of Staphylococcus aureus (strain Mu3 / ATCC 700698).